The sequence spans 92 residues: Small ribosomal subunit protein uS19 (92 aa).

The protein belongs to the universal ribosomal protein uS19 family.

Protein S19 forms a complex with S13 that binds strongly to the 16S ribosomal RNA. The sequence is that of Small ribosomal subunit protein uS19 from Bacillus cytotoxicus (strain DSM 22905 / CIP 110041 / 391-98 / NVH 391-98).